The chain runs to 302 residues: Protein FdhE homolog (302 aa).

This sequence belongs to the FdhE family.

It localises to the cytoplasm. In terms of biological role, necessary for formate dehydrogenase activity. In Shewanella sp. (strain MR-4), this protein is Protein FdhE homolog.